We begin with the raw amino-acid sequence, 271 residues long: Very long chain fatty acid elongase 3 (271 aa).

The N-linked (GlcNAc...) asparagine glycan is linked to N6. 7 helical membrane-spanning segments follow: residues 30–50 (FLEEYWVSSFLIVVVYLLLIV), 67–87 (PLILWSFFLAIFSILGTLRMW), 116–136 (FWSFLFLLSKVVELGDTAFII), 141–161 (PLIFVHWYHHSTVLLFTSFGY), 165–187 (VPSGGWFMTMNFGVHSVMYTYYT), 199–219 (LPMVITSLQILQMVLGTIFGI), and 236–256 (HFFWSFMLYGTYFILFAHFFH).

Belongs to the ELO family. ELOVL3 subfamily. In terms of assembly, interacts with TECR. N-Glycosylated. As to expression, expressed in brown adipose tissue and liver. In the skin, strong expressed in the cells of the inner layer of the outer root sheath of the hair follicles and in the sebocytes of the sebaceous glands. Hardly detectable in the epidermis and not at all in fibroblasts.

The protein resides in the endoplasmic reticulum membrane. It catalyses the reaction a very-long-chain acyl-CoA + malonyl-CoA + H(+) = a very-long-chain 3-oxoacyl-CoA + CO2 + CoA. It carries out the reaction eicosanoyl-CoA + malonyl-CoA + H(+) = 3-oxodocosanoyl-CoA + CO2 + CoA. The enzyme catalyses hexadecanoyl-CoA + malonyl-CoA + H(+) = 3-oxooctadecanoyl-CoA + CO2 + CoA. The catalysed reaction is octadecanoyl-CoA + malonyl-CoA + H(+) = 3-oxoeicosanoyl-CoA + CO2 + CoA. It catalyses the reaction (9Z)-octadecenoyl-CoA + malonyl-CoA + H(+) = 3-oxo-(11Z)-eicosenoyl-CoA + CO2 + CoA. It carries out the reaction (9Z,12Z)-octadecadienoyl-CoA + malonyl-CoA + H(+) = (11Z,14Z)-3-oxoicosa-11,14-dienoyl-CoA + CO2 + CoA. The enzyme catalyses (9Z,12Z,15Z)-octadecatrienoyl-CoA + malonyl-CoA + H(+) = (11Z,14Z,17Z)-3-oxoeicosatrienoyl-CoA + CO2 + CoA. The catalysed reaction is docosanoyl-CoA + malonyl-CoA + H(+) = 3-oxotetracosanoyl-CoA + CO2 + CoA. It catalyses the reaction tetradecanoyl-CoA + malonyl-CoA + H(+) = 3-oxohexadecanoyl-CoA + CO2 + CoA. It participates in lipid metabolism; polyunsaturated fatty acid biosynthesis. In terms of biological role, catalyzes the first and rate-limiting reaction of the four reactions that constitute the long-chain fatty acids elongation cycle. This endoplasmic reticulum-bound enzymatic process allows the addition of 2 carbons to the chain of long- and very long-chain fatty acids (VLCFAs) per cycle. Condensing enzyme that exhibits activity toward saturated and unsaturated acyl-CoA substrates with higher activity toward C18 acyl-CoAs, especially C18:0 acyl-CoAs. May participate in the production of saturated and monounsaturated VLCFAs of different chain lengths that are involved in multiple biological processes as precursors of membrane lipids and lipid mediators. Participates in the formation of certain VLCFA and triglycerides in certain cells of the hair follicles and the sebaceous glands, required for skin barrier function. Critical enzyme for lipid accumulation and metabolic activity in brown adipocytes during the early phase of the tissue recruitment. Plays a role in lipid storage and in resistance to diet-induced obesity. This Mus musculus (Mouse) protein is Very long chain fatty acid elongase 3.